The sequence spans 92 residues: Small ribosomal subunit protein uS19 (92 aa).

It belongs to the universal ribosomal protein uS19 family.

Functionally, protein S19 forms a complex with S13 that binds strongly to the 16S ribosomal RNA. This Lachnoclostridium phytofermentans (strain ATCC 700394 / DSM 18823 / ISDg) (Clostridium phytofermentans) protein is Small ribosomal subunit protein uS19.